Consider the following 410-residue polypeptide: Cytochrome P450 monooxygenase mpsF (410 aa).

A heme-binding site is contributed by Cys355.

Belongs to the cytochrome P450 family. It depends on heme as a cofactor.

It functions in the pathway secondary metabolite biosynthesis. Its function is as follows. Cytochrome P450 monooxygenase; part of the gene cluster that mediates the biosynthesis of macrophasetins, 3-decalinoyltetramic acids (DTAs) which feature a tetramate (pyrrolidine-2,4-dione) unit connected to a decalin fragment and that have potent bioactivities. The PKS-NRPS mpsA together with its associated enoylreductase partner mpsG incorporate one unit of acetyl-CoA, seven units of malonyl-CoA, and one unit of L-alanine to assemble the linear tetramic acid intermediate corresponding to the backbone of macrophasetins. Without the Diels-Alderase mpsD, the mpsA/G product can undergo the non-enzymatic intramolecular Diels-Alder (IMDA) reaction to generate both macrophasetin A and macrophasetin B. Catalyzed by mpsD, the linear tetramic acid intermediate is thoroughly converted to macrophasetin A via the endo-IMDA reaction in a regioselective and stereoselective manner. Finally, the cytochrome P450 monooxygenase mpsF catalyzes the hydroxylation at C20 to yield the end product macrophasetin C. This chain is Cytochrome P450 monooxygenase mpsF, found in Macrophomina phaseolina (strain MS6) (Charcoal rot fungus).